A 650-amino-acid polypeptide reads, in one-letter code: Epithelial sodium channel subunit beta (650 aa).

Residues 1 to 95 (MLLHINPAYL…IICEGPKKKA (95 aa)) lie on the Cytoplasmic side of the membrane. Residues 96–116 (MWFLLTLLFTALVCWQWGIFI) traverse the membrane as a helical segment. Topologically, residues 117-542 (RTYLSWEVSV…GGQFGFWMGG (426 aa)) are extracellular. 5 disulfide bridges follow: C143–C317, C229–C234, C241–C248, C294–C301, and C406–C458. A glycan (N-linked (GlcNAc...) asparagine) is linked at N244. Residue N305 is glycosylated (N-linked (GlcNAc...) asparagine). A helical transmembrane segment spans residues 543–563 (SVLCLIEFGEIIIDFVWITII). Over 564-650 (KLVALAKSLR…IESDSEGDAI (87 aa)) the chain is Cytoplasmic. Residues 600-650 (FQPDTAPRSPNTGPYPNEQALPIPGTPPPNYDSLRLQPLDVIESDSEGDAI) are disordered. A PY motif; recruits WW domain-containing proteins and is thereby required for ubiquitination and inhibition of the channel by NEDD4 and NEDD4L motif is present at residues 626 to 630 (PPPNY). Over residues 641 to 650 (IESDSEGDAI) the composition is skewed to acidic residues. S643 and S645 each carry phosphoserine.

Belongs to the amiloride-sensitive sodium channel (TC 1.A.6) family. SCNN1B subfamily. As to quaternary structure, component of the heterotrimeric epithelial sodium channel (ENaC) composed of an alpha/SCNN1A, a beta/SCNN1B and a gamma/SCNN1G subunit. An additional delta/SCNN1D subunit can replace the alpha/SCNN1A subunit to form an alternative channel with specific properties. Interacts with WWP1 (via WW domains). Interacts with WWP2 (via WW domains); inhibits the channel. Interacts with the full-length immature form of PCSK9 (pro-PCSK9). Interacts (N-glycosylated) with BPIFA1; the interaction is direct and inhibits the proteolytic processing of SCNN1A and SCNN1G and the activation of ENaC. Ubiquitinated. Can be ubiquitinated at multiple sites and undergo monoubiquitination and polyubiquitination. Ubiquitination by NEDD4 or NEDD4L inhibits the ENaC channel through endocytosis, intracellular retention and degradation of its individual subunits. However, some studies could not confirm the ubiquitination of this subunit of the ENaC. Post-translationally, phosphorylated on serine and threonine residues. Aldosterone and insulin increase the basal level of phosphorylation. In terms of processing, N-glycosylated. N-glycosylation is required for interaction with BPIFA1.

Its subcellular location is the apical cell membrane. It localises to the cytoplasmic vesicle membrane. It carries out the reaction Na(+)(in) = Na(+)(out). Originally identified and characterized by its inhibition by the diuretic drug amiloride. Functionally, this is one of the three pore-forming subunits of the heterotrimeric epithelial sodium channel (ENaC), a critical regulator of sodium balance and fluid homeostasis. ENaC operates in epithelial tissues, where it mediates the electrodiffusion of sodium ions from extracellular fluid through the apical membrane of cells, with water following osmotically. It plays a key role in maintaining sodium homeostasis through electrogenic sodium reabsorption in the kidneys. Additionally, ENaC is essential for airway surface liquid homeostasis, which is crucial for proper mucus clearance. The sequence is that of Epithelial sodium channel subunit beta from Pan troglodytes (Chimpanzee).